A 527-amino-acid chain; its full sequence is F-box protein SKIP2 (527 aa).

In terms of domain architecture, F-box spans 39-85; it reads DRDFTGDLPDECLAHVFQFLGAGDRKRCSLVCKRWLLVDGQSRHRLS.

Part of a SCF (ASK-cullin-F-box) protein ligase complex. Interacts with SKP1A/ASK1, SKP1B/ASK2 and ASK11.

The protein resides in the nucleus. Its pathway is protein modification; protein ubiquitination. Functionally, component of SCF(ASK-cullin-F-box) E3 ubiquitin ligase complexes, which may mediate the ubiquitination and subsequent proteasomal degradation of target proteins. The polypeptide is F-box protein SKIP2 (SKIP2) (Arabidopsis thaliana (Mouse-ear cress)).